A 917-amino-acid polypeptide reads, in one-letter code: Protein translocase subunit SecA (917 aa).

Residues Gln-87, 105–109, and Asp-501 contribute to the ATP site; that span reads GEGKT. The Zn(2+) site is built by Cys-901, Cys-903, Cys-912, and His-913.

It belongs to the SecA family. As to quaternary structure, monomer and homodimer. Part of the essential Sec protein translocation apparatus which comprises SecA, SecYEG and auxiliary proteins SecDF-YajC and YidC. It depends on Zn(2+) as a cofactor.

It localises to the cell inner membrane. It is found in the cytoplasm. The catalysed reaction is ATP + H2O + cellular proteinSide 1 = ADP + phosphate + cellular proteinSide 2.. Part of the Sec protein translocase complex. Interacts with the SecYEG preprotein conducting channel. Has a central role in coupling the hydrolysis of ATP to the transfer of proteins into and across the cell membrane, serving both as a receptor for the preprotein-SecB complex and as an ATP-driven molecular motor driving the stepwise translocation of polypeptide chains across the membrane. This is Protein translocase subunit SecA from Granulibacter bethesdensis (strain ATCC BAA-1260 / CGDNIH1).